The chain runs to 231 residues: uncharacterized protein (231 aa).

One can recognise an RCK N-terminal domain in the interval 3-119; sequence RADFCIIGLG…RTMGIREALI (117 aa). Positions 134–221 constitute an RCK C-terminal domain; it reads HGMETEIINL…VNQYLRYINP (88 aa).

This is an uncharacterized protein from Mycoplasma pneumoniae (strain ATCC 29342 / M129 / Subtype 1) (Mycoplasmoides pneumoniae).